The primary structure comprises 74 residues: Ubiquitin-like protein FUBI (74 aa).

It belongs to the ubiquitin family.

This Rattus norvegicus (Rat) protein is Ubiquitin-like protein FUBI (Fau).